The following is a 553-amino-acid chain: Copine-9 (553 aa).

C2 domains lie at 1 to 125 (MSLG…ERTL) and 132 to 255 (KCGT…FTVY). Asn-95 carries N-linked (GlcNAc...) asparagine glycosylation. Ca(2+) is bound by residues Asp-163, Asp-169, Asp-225, Asp-227, and Asp-233. One can recognise a VWFA domain in the interval 299–500 (NFTVAIDFTA…VQFVPFRDYV (202 aa)). The interval 531–553 (TRDIQPRPPPPANPSPIPAPEQP) is disordered. The span at 536 to 553 (PRPPPPANPSPIPAPEQP) shows a compositional bias: pro residues.

The protein belongs to the copine family. Requires Ca(2+) as cofactor. As to expression, expressed in melanocytes.

Probable calcium-dependent phospholipid-binding protein that may play a role in calcium-mediated intracellular processes. Plays a role in dendrite formation by melanocytes. This chain is Copine-9, found in Homo sapiens (Human).